The primary structure comprises 262 residues: Acyl-[acyl-carrier-protein]--UDP-N-acetylglucosamine O-acyltransferase (262 aa).

It belongs to the transferase hexapeptide repeat family. LpxA subfamily. In terms of assembly, homotrimer.

It is found in the cytoplasm. The enzyme catalyses a (3R)-hydroxyacyl-[ACP] + UDP-N-acetyl-alpha-D-glucosamine = a UDP-3-O-[(3R)-3-hydroxyacyl]-N-acetyl-alpha-D-glucosamine + holo-[ACP]. It participates in glycolipid biosynthesis; lipid IV(A) biosynthesis; lipid IV(A) from (3R)-3-hydroxytetradecanoyl-[acyl-carrier-protein] and UDP-N-acetyl-alpha-D-glucosamine: step 1/6. Involved in the biosynthesis of lipid A, a phosphorylated glycolipid that anchors the lipopolysaccharide to the outer membrane of the cell. The sequence is that of Acyl-[acyl-carrier-protein]--UDP-N-acetylglucosamine O-acyltransferase from Pectobacterium carotovorum subsp. carotovorum (strain PC1).